Reading from the N-terminus, the 94-residue chain is uncharacterized protein (94 aa).

The HTH cro/C1-type domain maps to 13–67; that stretch reads IQESLDELNVSLREFARAMEIAPSTASRLLTGKAALTPEMAIKLSVVIGSSPQMW. Positions 24-43 form a DNA-binding region, H-T-H motif; it reads LREFARAMEIAPSTASRLLT.

The protein belongs to the VapA/VapI family.

This is an uncharacterized protein from Escherichia coli (strain K12).